A 344-amino-acid chain; its full sequence is Protein BREVIS RADIX (344 aa).

The BRX 1 domain maps to 139 to 194 (KEWMAQVEPGVHITFASLPTGGNDLKRIRFSREMFDKWQAQRWWGENYDKIVELYN). The tract at residues 203–286 (LQTPARSDDQ…DPPSMSNASE (84 aa)) is disordered. Basic and acidic residues predominate over residues 223–233 (DSARESKDWTP). Over residues 248–264 (YGGSSNYGPGSYHGGPP) the composition is skewed to low complexity. Residues 289–344 (AEWIEEDEPGVYITIRQLSDGTRELRRVRFSRERFGEVHAKTWWEQNRERIQTQYL) enclose the BRX 2 domain.

It belongs to the BRX family. As to quaternary structure, homodimer and heterodimer with BRXL1. Interacts with NGA1 and ARF5. Expressed in the developing protophloem up to the elongation zone in root meristem of young seedlings, in the columella and the phloem vasculature throughout the root and in the phloem vasculature in the shoot. Detected in the shoot meristem and in primordia. Low expression in stomata. Confined to sieve element precursor cells and to protophloem.

Its subcellular location is the nucleus. The protein resides in the cell membrane. Its function is as follows. Acts as a regulator of cell proliferation and elongation in the root and shoot. Regulates roots architecture and primary root protophloem differentiation. BRX, BAM3, and CLE45 act together to regulate the transition of protophloem cells from proliferation to differentiation, thus impinging on postembryonic growth capacity of the root meristem. Probable transcription regulator. Regulated by the auxin response factor ARF5. Polarly localized in vascular cells and subject to endocytic recycling. Required for CPD expression and for correct nuclear auxin response. Mediates cross-talk between the auxin and brassinosteroid pathways. BRX is a target for auxin-induced, proteasome-mediated degradation. The chain is Protein BREVIS RADIX from Arabidopsis thaliana (Mouse-ear cress).